Consider the following 142-residue polypeptide: Nucleoside diphosphate kinase (142 aa).

Residues Lys11, Phe59, Arg87, Thr93, Arg104, and Asn114 each contribute to the ATP site. His117 serves as the catalytic Pros-phosphohistidine intermediate.

Belongs to the NDK family. As to quaternary structure, homotetramer. It depends on Mg(2+) as a cofactor.

Its subcellular location is the cytoplasm. It catalyses the reaction a 2'-deoxyribonucleoside 5'-diphosphate + ATP = a 2'-deoxyribonucleoside 5'-triphosphate + ADP. The catalysed reaction is a ribonucleoside 5'-diphosphate + ATP = a ribonucleoside 5'-triphosphate + ADP. Major role in the synthesis of nucleoside triphosphates other than ATP. The ATP gamma phosphate is transferred to the NDP beta phosphate via a ping-pong mechanism, using a phosphorylated active-site intermediate. This Yersinia pseudotuberculosis serotype I (strain IP32953) protein is Nucleoside diphosphate kinase.